The primary structure comprises 112 residues: Phosphoribosyl-AMP cyclohydrolase (112 aa).

Asp-76 contacts Mg(2+). Cys-77 is a binding site for Zn(2+). Residues Asp-78 and Asp-80 each coordinate Mg(2+). Positions 93 and 100 each coordinate Zn(2+).

This sequence belongs to the PRA-CH family. In terms of assembly, homodimer. Requires Mg(2+) as cofactor. Zn(2+) is required as a cofactor.

It is found in the cytoplasm. It carries out the reaction 1-(5-phospho-beta-D-ribosyl)-5'-AMP + H2O = 1-(5-phospho-beta-D-ribosyl)-5-[(5-phospho-beta-D-ribosylamino)methylideneamino]imidazole-4-carboxamide. It participates in amino-acid biosynthesis; L-histidine biosynthesis; L-histidine from 5-phospho-alpha-D-ribose 1-diphosphate: step 3/9. Catalyzes the hydrolysis of the adenine ring of phosphoribosyl-AMP. The sequence is that of Phosphoribosyl-AMP cyclohydrolase from Streptococcus thermophilus (strain ATCC BAA-491 / LMD-9).